A 241-amino-acid polypeptide reads, in one-letter code: Meiotically up-regulated gene 130 protein (241 aa).

The protein localises to the mitochondrion. Its function is as follows. Has a role in meiosis. The sequence is that of Meiotically up-regulated gene 130 protein (mug130) from Schizosaccharomyces pombe (strain 972 / ATCC 24843) (Fission yeast).